Consider the following 396-residue polypeptide: MQNMVILGATGSIGASTLSVISANPDAYRVYALVANASVDKMLALCITHRPQVAHMVDSQAALALQAKLPPELNIQVSSGEDELIALVTATEVDTVMAAIVGAAGLVPTLAAVKAGKRVLLANKEALVMSGELFIEATKASGATLLPVDSEHNAIFQCLPEEVQANLGRCDLAASGISHILLTGSGGPFLTAELASLAAMTPAQACKHPNWSMGPKISVDSATMMNKGLEFIEARWLFNTQNDQLKVVIHPQSVIHSMVQYRDGSVIAQMGNPDMRTPIAHCMSYPQRISSGVEPLDFFKVGQLSFCEPDFNRFPCLALAIAACAQGQEATTVLNAANEIAVEAFLQGQIGFTHIAKVNEACLSSVPKRAMTSIDDIIALDAQTRIYAREQLAKLA.

NADPH-binding residues include threonine 10, glycine 11, serine 12, isoleucine 13, and asparagine 123. Lysine 124 is a binding site for 1-deoxy-D-xylulose 5-phosphate. Glutamate 125 is a binding site for NADPH. Aspartate 149 serves as a coordination point for Mn(2+). Positions 150, 151, 185, and 208 each coordinate 1-deoxy-D-xylulose 5-phosphate. Glutamate 151 serves as a coordination point for Mn(2+). An NADPH-binding site is contributed by glycine 214. 4 residues coordinate 1-deoxy-D-xylulose 5-phosphate: serine 221, asparagine 226, lysine 227, and glutamate 230. Glutamate 230 lines the Mn(2+) pocket.

This sequence belongs to the DXR family. Mg(2+) is required as a cofactor. It depends on Mn(2+) as a cofactor.

The catalysed reaction is 2-C-methyl-D-erythritol 4-phosphate + NADP(+) = 1-deoxy-D-xylulose 5-phosphate + NADPH + H(+). It participates in isoprenoid biosynthesis; isopentenyl diphosphate biosynthesis via DXP pathway; isopentenyl diphosphate from 1-deoxy-D-xylulose 5-phosphate: step 1/6. Functionally, catalyzes the NADPH-dependent rearrangement and reduction of 1-deoxy-D-xylulose-5-phosphate (DXP) to 2-C-methyl-D-erythritol 4-phosphate (MEP). This Shewanella sp. (strain MR-4) protein is 1-deoxy-D-xylulose 5-phosphate reductoisomerase.